A 54-amino-acid chain; its full sequence is Relaxin (54 aa).

At Gln1 the chain carries Pyrrolidone carboxylic acid. Disulfide bonds link Cys10/Cys41, Cys22/Cys54, and Cys40/Cys45.

The protein belongs to the insulin family. Heterodimer of a B chain and an A chain linked by two disulfide bonds.

It is found in the secreted. Functionally, relaxin is an ovarian hormone that acts with estrogen to produce dilatation of the birth canal in many mammals. This is Relaxin from Balaenoptera acutorostrata (Common minke whale).